The following is a 646-amino-acid chain: Centrosomal protein of 72 kDa (646 aa).

LRR repeat units follow at residues 28-49, 54-75, and 76-97; these read ELRS…GNSL, ALKS…QYLV, and SLES…FRLH. An LRRCT domain is found at 110–149; the sequence is NPVVKNESDYRLFVVHMLPKLRQLDDRPVRESERKASQLH. A phosphoserine mark is found at S117 and S236. Disordered stretches follow at residues 300-342 and 357-399; these read SVDV…RFQV and GPSS…SDPR. The span at 307 to 319 shows a compositional bias: low complexity; sequence ASSAQKSSLSSQK. S380 is subject to Phosphoserine. Residues 383–392 are compositionally biased toward basic and acidic residues; the sequence is EALEAEERTS. S402 carries the post-translational modification Phosphoserine. The stretch at 476-622 forms a coiled coil; that stretch reads LSLENKTLQS…RAEVEQMRWS (147 aa).

It belongs to the CEP72 family. As to quaternary structure, interacts with KIZ, PCM1 and CDK5RAP2.

The protein resides in the cytoplasm. Its subcellular location is the cytoskeleton. It is found in the microtubule organizing center. It localises to the centrosome. The protein localises to the centriolar satellite. In terms of biological role, involved in the recruitment of key centrosomal proteins to the centrosome. Provides centrosomal microtubule-nucleation activity on the gamma-tubulin ring complexes (gamma-TuRCs) and has critical roles in forming a focused bipolar spindle, which is needed for proper tension generation between sister chromatids. Required for localization of KIZ, AKAP9 and gamma-tubulin ring complexes (gamma-TuRCs). Involved in centriole duplication. Required for CDK5RAP22, CEP152, WDR62 and CEP63 centrosomal localization and promotes the centrosomal localization of CDK2. This Mus musculus (Mouse) protein is Centrosomal protein of 72 kDa (Cep72).